The sequence spans 156 residues: 6,7-dimethyl-8-ribityllumazine synthase (156 aa).

5-amino-6-(D-ribitylamino)uracil is bound by residues Phe22, 57–59, and 81–83; these read AYE and SVI. Residue 86–87 participates in (2S)-2-hydroxy-3-oxobutyl phosphate binding; that stretch reads GT. His89 serves as the catalytic Proton donor. Phe114 is a binding site for 5-amino-6-(D-ribitylamino)uracil. Residue Arg128 participates in (2S)-2-hydroxy-3-oxobutyl phosphate binding.

It belongs to the DMRL synthase family. In terms of assembly, forms an icosahedral capsid composed of 60 subunits, arranged as a dodecamer of pentamers.

It carries out the reaction (2S)-2-hydroxy-3-oxobutyl phosphate + 5-amino-6-(D-ribitylamino)uracil = 6,7-dimethyl-8-(1-D-ribityl)lumazine + phosphate + 2 H2O + H(+). It functions in the pathway cofactor biosynthesis; riboflavin biosynthesis; riboflavin from 2-hydroxy-3-oxobutyl phosphate and 5-amino-6-(D-ribitylamino)uracil: step 1/2. In terms of biological role, catalyzes the formation of 6,7-dimethyl-8-ribityllumazine by condensation of 5-amino-6-(D-ribitylamino)uracil with 3,4-dihydroxy-2-butanone 4-phosphate. This is the penultimate step in the biosynthesis of riboflavin. This chain is 6,7-dimethyl-8-ribityllumazine synthase, found in Photobacterium leiognathi.